A 392-amino-acid polypeptide reads, in one-letter code: HCLS1-binding protein 3 (392 aa).

Residue methionine 1 is modified to N-acetylmethionine. Serine 3, serine 139, and serine 194 each carry phosphoserine. The 124-residue stretch at 19–142 folds into the PX domain; it reads GLDLTVPQHQ…EFLGTRSPGA (124 aa). 3 disordered regions span residues 138–162, 174–265, and 319–364; these read RSPGAAGLTSRDSSVLDGTDSQTGN, DQVA…PLKL, and GAEP…KPQE. Residues 190 to 201 show a composition bias toward acidic residues; sequence DAEESLEEEEAL. A compositionally biased stretch (basic residues) spans 208-220; sequence RSKKPKKHPKVAV. Phosphoserine is present on serine 249. Over residues 325 to 335 the composition is skewed to pro residues; it reads KPQLKPKPPVA. Position 337 is an N6-acetyllysine (lysine 337).

As to quaternary structure, binds HCLS1. Interacts with the SH3 domain of HCLS1 in vitro.

Its function is as follows. May be a modulator of IL-2 signaling. In Homo sapiens (Human), this protein is HCLS1-binding protein 3 (HS1BP3).